We begin with the raw amino-acid sequence, 380 residues long: Putative 8-amino-7-oxononanoate synthase (380 aa).

A substrate-binding site is contributed by arginine 18. Pyridoxal 5'-phosphate is bound at residue 106–107 (GY). Substrate is bound at residue histidine 131. Pyridoxal 5'-phosphate is bound by residues serine 179, 205–208 (DEAH), and 236–239 (TFGK). At lysine 239 the chain carries N6-(pyridoxal phosphate)lysine. Threonine 352 is a substrate binding site.

This sequence belongs to the class-II pyridoxal-phosphate-dependent aminotransferase family. BioF subfamily. Homodimer. Requires pyridoxal 5'-phosphate as cofactor.

The catalysed reaction is 6-carboxyhexanoyl-[ACP] + L-alanine + H(+) = (8S)-8-amino-7-oxononanoate + holo-[ACP] + CO2. It functions in the pathway cofactor biosynthesis; biotin biosynthesis. In terms of biological role, catalyzes the decarboxylative condensation of pimeloyl-[acyl-carrier protein] and L-alanine to produce 8-amino-7-oxononanoate (AON), [acyl-carrier protein], and carbon dioxide. This chain is Putative 8-amino-7-oxononanoate synthase (bioF), found in Neisseria meningitidis serogroup C (strain 053442).